The chain runs to 265 residues: Homeobox protein CDX-1 (265 aa).

Positions 9-153 (KDSPVYPGPA…GGGGSGKTRT (145 aa)) are disordered. Over residues 30–42 (YGPPAPPPAPPQY) the composition is skewed to pro residues. Positions 73–92 (AAAYGPGPAAPAASPASLAF) are enriched in low complexity. The span at 93 to 108 (GPPPDFSPVPAPPGPG) shows a compositional bias: pro residues. Over residues 110–126 (GLLAQPLGGPGTPSSPG) the composition is skewed to low complexity. Positions 154–213 (KDKYRVVYTDHQRLELEKEFHYSRYITIRRKSELAANLGLTERQVKIWFQNRRAKERKVN) form a DNA-binding region, homeobox. The tract at residues 157–178 (YRVVYTDHQRLELEKEFHYSRY) is interaction with DNA. Residues 196–207 (RQVKIWFQNRRA) are interaction with 5-mCpG DNA. Positions 207–217 (AKERKVNKKKQ) are enriched in basic residues. The segment at 207–265 (AKERKVNKKKQQQQQPPQPPMAHDITATPAGPSLGGLCPSNTSLLATSSPMPVKEEFLP) is disordered. Residues 245–256 (PSNTSLLATSSP) show a composition bias toward polar residues.

Belongs to the Caudal homeobox family. Intestinal epithelium.

Its subcellular location is the nucleus. Plays a role in transcriptional regulation. Involved in activated KRAS-mediated transcriptional activation of PRKD1 in colorectal cancer (CRC) cells. Binds to the PRKD1 promoter in colorectal cancer (CRC) cells. Could play a role in the terminal differentiation of the intestine. Binds preferentially to methylated DNA. The protein is Homeobox protein CDX-1 (CDX1) of Homo sapiens (Human).